A 140-amino-acid chain; its full sequence is Large ribosomal subunit protein uL13 (140 aa).

It belongs to the universal ribosomal protein uL13 family. As to quaternary structure, part of the 50S ribosomal subunit.

Its function is as follows. This protein is one of the early assembly proteins of the 50S ribosomal subunit, although it is not seen to bind rRNA by itself. It is important during the early stages of 50S assembly. The sequence is that of Large ribosomal subunit protein uL13 from Nautilia profundicola (strain ATCC BAA-1463 / DSM 18972 / AmH).